The chain runs to 143 residues: MGGQVIEVEVAGVRFLLRKDLRYTESDEWARLEDGVATVGITDFAQKELKDIVGVELPEKGRKVKKGEAVATVESIKATADIYAPLSGEIVDVNEKLLDQPELINDDPYGEGWIFKIKVEDPGEFESLLTPEQYVESVRKRKE.

A Lipoyl-binding domain is found at 36 to 118 (VATVGITDFA…YGEGWIFKIK (83 aa)). Lys77 bears the N6-lipoyllysine mark.

This sequence belongs to the GcvH family. As to quaternary structure, the glycine cleavage system is composed of four proteins: P, T, L and H. The cofactor is (R)-lipoate.

The glycine cleavage system catalyzes the degradation of glycine. The H protein shuttles the methylamine group of glycine from the P protein to the T protein. The polypeptide is Probable glycine cleavage system H protein (Aeropyrum pernix (strain ATCC 700893 / DSM 11879 / JCM 9820 / NBRC 100138 / K1)).